We begin with the raw amino-acid sequence, 868 residues long: DNA mismatch repair protein MutS (868 aa).

An ATP-binding site is contributed by 620-627 (GPNMSGKS).

Belongs to the DNA mismatch repair MutS family.

Its function is as follows. This protein is involved in the repair of mismatches in DNA. It is possible that it carries out the mismatch recognition step. This protein has a weak ATPase activity. In Flavobacterium johnsoniae (strain ATCC 17061 / DSM 2064 / JCM 8514 / BCRC 14874 / CCUG 350202 / NBRC 14942 / NCIMB 11054 / UW101) (Cytophaga johnsonae), this protein is DNA mismatch repair protein MutS.